The primary structure comprises 406 residues: Type IV pilus assembly protein PilC (406 aa).

4 helical membrane-spanning segments follow: residues 69-91 (IFSR…LAIL), 171-191 (YPVI…TGIV), 211-231 (FLIA…LLAV), and 377-397 (MIIF…LPLF).

This sequence belongs to the GSP F family. As to quaternary structure, homotetramer. Interacts with PilB.

It localises to the cell inner membrane. Its function is as follows. Essential inner membrane component of the type IV pilus (T4P) that plays a role in surface and host cell adhesion, colonization, biofilm maturation, virulence, and twitching, a form of surface-associated motility facilitated by cycles of extension, adhesion, and retraction of T4P fibers. Controls both pilus assembly and disassembly and plays an important role in PilB localization to the complex and ATPase activity. The protein is Type IV pilus assembly protein PilC of Thermus thermophilus (strain ATCC 27634 / DSM 579 / HB8).